The sequence spans 135 residues: Salivary protein 15 Iper-1 (135 aa).

Positions 1-22 (MESFVAMKVVCILFLFVVAAEA) are cleaved as a signal peptide. Asn-93 and Asn-104 each carry an N-linked (GlcNAc...) asparagine glycan. The tract at residues 116–135 (GPNKQTCADKSKCVGHIPGC) is CD4-binding.

It belongs to the salp15 family. In terms of assembly, interacts with host CD4. Interacts with host DC-SIGN (CD209). As to quaternary structure, (Microbial infection) Interacts with Borrelia outer surface protein C (OspC). As to expression, expressed in salivary glands from feeding female ticks. Highly expressed 4 days after start of feeding.

It is found in the secreted. In terms of biological role, salivary tick protein that downregulates host immune system by binding to both dendritic cells, and CD4(+) T cells. Specifically binds to the CD4 coreceptor on T cells. This interaction prevents the activation of the Src kinase, Lck, and its downstream substrate Zap-70, and results in deficient activation of PLCgamma1, the repression of calcium fluxes triggered by T-cell antigen receptor (TCR) ligation, and a subsequent reduction in interleukin-2 production. This salivary protein also binds to DC-SIGN (CD209) on dendritic cells (DC) and activates the Raf-1 kinase/MEK signaling pathway that results in down-regulating expression of pro-inflammatory cytokines. Furthermore, it inhibits T cell proliferation induced by DCs. It also inhibits in vitro keratinocyte inflammation induced by Borrelia burgdorferi or by the major outer surface protein (OspC) of Borrelia. In addition, it downregulates chemokines and monocyte chemoattractant protein 1, as well as several antimicrobial peptides such as defensins, cathelicidin, psoriasin, and RNase 7. Apart from its immunomodulatory activities, it is also associated with protection of Borrelia spirochetes from antibody-mediated killing through its binding to OspC. In vivo, tests on different immune disease animal models show promising therapeutic results, e.g., in inhibiting HIV infection, experimental autoimmune encephalomyelitis, transplantation rejection, and asthma. Functionally, (Microbial infection) Protects Borrelia garinii from anti-Borrelia antibody-mediated cytotoxicity in vitro. May facilitate B.garinii transmission in mouse model. Its function is as follows. (Microbial infection) Protects Borrelia burgdorferi from anti-Borrelia antibody-mediated cytotoxicity in vitro. (Microbial infection) Protects Borrelia afzelii from anti-Borrelia antibody-mediated cytotoxicity in vitro. This Ixodes persulcatus (Taiga tick) protein is Salivary protein 15 Iper-1.